Here is a 99-residue protein sequence, read N- to C-terminus: Large ribosomal subunit protein eL36A (99 aa).

This sequence belongs to the eukaryotic ribosomal protein eL36 family. In terms of assembly, component of the large ribosomal subunit (LSU). Mature yeast ribosomes consist of a small (40S) and a large (60S) subunit. The 40S small subunit contains 1 molecule of ribosomal RNA (18S rRNA) and at least 33 different proteins. The large 60S subunit contains 3 rRNA molecules (25S, 5.8S and 5S rRNA) and at least 46 different proteins.

It localises to the cytoplasm. Its function is as follows. Component of the ribosome, a large ribonucleoprotein complex responsible for the synthesis of proteins in the cell. The small ribosomal subunit (SSU) binds messenger RNAs (mRNAs) and translates the encoded message by selecting cognate aminoacyl-transfer RNA (tRNA) molecules. The large subunit (LSU) contains the ribosomal catalytic site termed the peptidyl transferase center (PTC), which catalyzes the formation of peptide bonds, thereby polymerizing the amino acids delivered by tRNAs into a polypeptide chain. The nascent polypeptides leave the ribosome through a tunnel in the LSU and interact with protein factors that function in enzymatic processing, targeting, and the membrane insertion of nascent chains at the exit of the ribosomal tunnel. The chain is Large ribosomal subunit protein eL36A (rpl3601) from Schizosaccharomyces pombe (strain 972 / ATCC 24843) (Fission yeast).